A 366-amino-acid chain; its full sequence is MNKVVLYCRPGFEKECAAEITDKAARLEVFGFARVKEDSGYVIFEGYQQDDGEKLVRDLPFSSLIFARQMFVVGELLRDLPPEDRITPIVGMLQGMVEKGGELRVEVADTNESKELMKFCRKFTVPLRAALREAGVLTNYETPKRPVVHVFFIAPGCCYTGYSYSNNNSPFYMGIPRLKFPSDAPSRSTLKLEEAFHVFIPADEWDERLANGMYAVDLGACPGGWTYQLVKRNMWVSSVDNGPMAQSLMDTGQVTWLREDGFRYRPNRNNISWMVCDMVEKPAKVAALMAQWLVNGWCRETIFNLKLPMKKRYEEVSQNLAYIQAQLDEHGVNAQIQARQLYHDREEVTVHVRRLWAAVGGRRDER.

Residues Ser-188, Cys-221–Gly-224, Asp-240, Asp-260, and Asp-277 each bind S-adenosyl-L-methionine. Lys-306 functions as the Proton acceptor in the catalytic mechanism.

This sequence belongs to the class I-like SAM-binding methyltransferase superfamily. RNA methyltransferase RlmE family. RlmM subfamily. As to quaternary structure, monomer.

The protein resides in the cytoplasm. The enzyme catalyses cytidine(2498) in 23S rRNA + S-adenosyl-L-methionine = 2'-O-methylcytidine(2498) in 23S rRNA + S-adenosyl-L-homocysteine + H(+). In terms of biological role, catalyzes the 2'-O-methylation at nucleotide C2498 in 23S rRNA. In Klebsiella pneumoniae subsp. pneumoniae (strain ATCC 700721 / MGH 78578), this protein is Ribosomal RNA large subunit methyltransferase M.